A 982-amino-acid chain; its full sequence is Serine/threonine-protein kinase ATG1 (982 aa).

Residues 19–324 (FVIGAEIGKG…FENFFAHPVI (306 aa)) form the Protein kinase domain. ATP contacts are provided by residues 25-33 (IGKGSFAQV) and Lys-48. Asp-162 acts as the Proton acceptor in catalysis. Disordered stretches follow at residues 334 to 506 (DDIP…REKA), 813 to 834 (RLPD…SVNG), 898 to 918 (PKRR…DGHA), and 947 to 982 (RMIS…SYSS). 2 stretches are compositionally biased toward basic and acidic residues: residues 335–359 (DIPK…KSDD) and 372–387 (HPTD…RRVE). A compositionally biased stretch (low complexity) spans 388 to 398 (PPSSAAESAPS). Polar residues predominate over residues 463 to 481 (SNASLNRSNRESSSPTSAA).

It belongs to the protein kinase superfamily. Ser/Thr protein kinase family. APG1/unc-51/ULK1 subfamily. In terms of assembly, homodimer. Forms a ternary complex with ATG13 and ATG17. In terms of tissue distribution, uniformly detected in conidia, mycelia and appressoria (at protein level).

It is found in the cytoplasm. It localises to the preautophagosomal structure membrane. It catalyses the reaction L-seryl-[protein] + ATP = O-phospho-L-seryl-[protein] + ADP + H(+). The enzyme catalyses L-threonyl-[protein] + ATP = O-phospho-L-threonyl-[protein] + ADP + H(+). Functionally, serine/threonine protein kinase involved in the cytoplasm to vacuole transport (Cvt) and found to be essential in autophagy, where it is required for the formation of autophagosomes. Involved in the clearance of protein aggregates which cannot be efficiently cleared by the proteasome. Required for selective autophagic degradation of the nucleus (nucleophagy) as well as for mitophagy which contributes to regulate mitochondrial quantity and quality by eliminating the mitochondria to a basal level to fulfill cellular energy requirements and preventing excess ROS production. Also involved in endoplasmic reticulum-specific autophagic process, in selective removal of ER-associated degradation (ERAD) substrates. Plays a key role in ATG9 and ATG23 cycling through the pre-autophagosomal structure and is necessary to promote ATG18 binding to ATG9 through phosphorylation of ATG9. Catalyzes phosphorylation of ATG4, decreasing the interaction between ATG4 and ATG8 and impairing deconjugation of PE-conjugated forms of ATG8. Autophagy is essential to fungal development, production of appressorium turgor, and pathogenicity in rice blast disease. The sequence is that of Serine/threonine-protein kinase ATG1 from Pyricularia oryzae (strain 70-15 / ATCC MYA-4617 / FGSC 8958) (Rice blast fungus).